The following is a 423-amino-acid chain: Progestin and adipoQ receptor-like protein 1 (423 aa).

At 1–201 (MDPDEVNQAL…KSIWSLHTET (201 aa)) the chain is on the cytoplasmic side. The disordered stretch occupies residues 54-140 (VVSPTNSDDE…DEDELEVDVK (87 aa)). Residues 60–69 (SDDEEGEFCS) show a composition bias toward acidic residues. Residues 104 to 114 (TVLRYRRKKGG) show a composition bias toward basic residues. The chain crosses the membrane as a helical span at residues 202–222 (GNIWTHLIGCVAFFLLACWFL). Topologically, residues 223 to 234 (TRPDNHIQFQEK) are extracellular. Residues 235–252 (VVFSFFFAGAVSVSDSRS) form a helical membrane-spanning segment. Topologically, residues 253-288 (PSTPSRVIRSTSSRYSANSTIWESRCSLSARLFQPK) are cytoplasmic. The chain crosses the membrane as a helical span at residues 289–309 (ITYIAMVCVLGIGAIVVSLWD). The Extracellular portion of the chain corresponds to 310 to 320 (KFSESKYRPVR). A helical membrane pass occupies residues 321–341 (AAVFVGMGCSGVIPTIHYIIT). Topologically, residues 342–351 (DGVHSLFADN) are cytoplasmic. A helical transmembrane segment spans residues 352–372 (SFHWLLLMAFLYLLGAALYAT). Over 373–392 (RTPERFFPGKCDIWFQSHQL) the chain is Extracellular. Residues 393-413 (FHTCVVIAAFVHYYGISEMAF) form a helical membrane-spanning segment. Residues 414–423 (ARLNEQCPVR) are Cytoplasmic-facing.

The protein belongs to the ADIPOR family.

The protein localises to the membrane. Probable receptor, which may be involved in metabolic pathways that regulate lipid metabolism such as fatty acid oxidation. The polypeptide is Progestin and adipoQ receptor-like protein 1 (Caenorhabditis briggsae).